The chain runs to 669 residues: Alpha-1,4-glucan:maltose-1-phosphate maltosyltransferase 2 (669 aa).

Lys255, Gln315, and Asp350 together coordinate alpha-maltose 1-phosphate. The Nucleophile role is filled by Asp385. Alpha-maltose 1-phosphate is bound at residue Asn386. Glu414 functions as the Proton donor in the catalytic mechanism. 525–526 (KY) contributes to the alpha-maltose 1-phosphate binding site.

The protein belongs to the glycosyl hydrolase 13 family. GlgE subfamily. Homodimer.

It carries out the reaction alpha-maltose 1-phosphate + [(1-&gt;4)-alpha-D-glucosyl](n) = [(1-&gt;4)-alpha-D-glucosyl](n+2) + phosphate. In terms of biological role, maltosyltransferase that uses maltose 1-phosphate (M1P) as the sugar donor to elongate linear or branched alpha-(1-&gt;4)-glucans. Maltooligosaccharides with a degree of polymerization (DP) superior or equal to 4 are efficient acceptors, with DP6 being optimal in the GlgE-catalyzed polymerization with M1P. Is probably involved in a branched alpha-glucan biosynthetic pathway from trehalose, together with TreS, Mak and GlgB. The chain is Alpha-1,4-glucan:maltose-1-phosphate maltosyltransferase 2 (glgE2) from Streptomyces coelicolor (strain ATCC BAA-471 / A3(2) / M145).